Reading from the N-terminus, the 142-residue chain is Transcriptional regulator MraZ (142 aa).

2 consecutive SpoVT-AbrB domains span residues 5-47 (THTP…PAPE) and 76-119 (AHDE…DRVA).

It belongs to the MraZ family. In terms of assembly, forms oligomers.

Its subcellular location is the cytoplasm. It is found in the nucleoid. This chain is Transcriptional regulator MraZ, found in Salinispora arenicola (strain CNS-205).